Here is a 258-residue protein sequence, read N- to C-terminus: Eukaryotic translation initiation factor 3 subunit J (258 aa).

Residues 1 to 11 (MAAAAAAAGDS) show a composition bias toward low complexity. Positions 1–108 (MAAAAAAAGD…LEEPEEPKVL (108 aa)) are disordered. Residue Ala-2 is modified to N-acetylalanine. Positions 2-69 (AAAAAAAGDS…KEEAEVKPEV (68 aa)) are sufficient for interaction with EIF3B. Residues Ser-11, Ser-13, and Ser-20 each carry the phosphoserine modification. The span at 40–59 (EGEDEDEDVKDNWDDDDDEK) shows a compositional bias: acidic residues. Basic and acidic residues predominate over residues 60–106 (KEEAEVKPEVKISEKKKIAEKIKEKERQQKKRQEEIKKRLEEPEEPK). A coiled-coil region spans residues 70 to 135 (KISEKKKIAE…ESDLELAKET (66 aa)). Residue Lys-106 forms a Glycyl lysine isopeptide (Lys-Gly) (interchain with G-Cter in SUMO2) linkage. Thr-109 carries the phosphothreonine modification. Ser-127 carries the post-translational modification Phosphoserine. The segment at 217-238 (SKAKKKKKGVVPGGGLKATMKD) is disordered. Residues 243 to 258 (YGGYDGGYVQDYEDFM) form a promotes stable association with the 40S ribosome region. At Tyr-254 the chain carries Phosphotyrosine.

Component of the eukaryotic translation initiation factor 3 (eIF-3) complex, which is composed of 13 subunits: EIF3A, EIF3B, EIF3C, EIF3D, EIF3E, EIF3F, EIF3G, EIF3H, EIF3I, EIF3J, EIF3K, EIF3L and EIF3M. The eIF-3 complex appears to include 3 stable modules: module A is composed of EIF3A, EIF3B, EIF3G and EIF3I; module B is composed of EIF3F, EIF3H, and EIF3M; and module C is composed of EIF3C, EIF3D, EIF3E, EIF3K and EIF3L. EIF3C of module C binds EIF3B of module A and EIF3H of module B, thereby linking the three modules. EIF3J is a labile subunit that binds to the eIF-3 complex via EIF3B. The eIF-3 complex interacts with RPS6KB1 under conditions of nutrient depletion. Mitogenic stimulation leads to binding and activation of a complex composed of MTOR and RPTOR, leading to phosphorylation and release of RPS6KB1 and binding of EIF4B to eIF-3. Post-translationally, phosphorylated. Phosphorylation is enhanced upon serum stimulation.

The protein resides in the cytoplasm. In terms of biological role, component of the eukaryotic translation initiation factor 3 (eIF-3) complex, which is required for several steps in the initiation of protein synthesis. The eIF-3 complex associates with the 40S ribosome and facilitates the recruitment of eIF-1, eIF-1A, eIF-2:GTP:methionyl-tRNAi and eIF-5 to form the 43S pre-initiation complex (43S PIC). The eIF-3 complex stimulates mRNA recruitment to the 43S PIC and scanning of the mRNA for AUG recognition. The eIF-3 complex is also required for disassembly and recycling of post-termination ribosomal complexes and subsequently prevents premature joining of the 40S and 60S ribosomal subunits prior to initiation. The eIF-3 complex specifically targets and initiates translation of a subset of mRNAs involved in cell proliferation, including cell cycling, differentiation and apoptosis, and uses different modes of RNA stem-loop binding to exert either translational activation or repression. The protein is Eukaryotic translation initiation factor 3 subunit J of Homo sapiens (Human).